Here is a 199-residue protein sequence, read N- to C-terminus: Nucleoside triphosphate pyrophosphatase (199 aa).

Catalysis depends on D76, which acts as the Proton acceptor.

The protein belongs to the Maf family. The cofactor is a divalent metal cation.

It localises to the cytoplasm. It catalyses the reaction a ribonucleoside 5'-triphosphate + H2O = a ribonucleoside 5'-phosphate + diphosphate + H(+). It carries out the reaction a 2'-deoxyribonucleoside 5'-triphosphate + H2O = a 2'-deoxyribonucleoside 5'-phosphate + diphosphate + H(+). Its function is as follows. Nucleoside triphosphate pyrophosphatase. May have a dual role in cell division arrest and in preventing the incorporation of modified nucleotides into cellular nucleic acids. This chain is Nucleoside triphosphate pyrophosphatase, found in Ruegeria sp. (strain TM1040) (Silicibacter sp.).